Consider the following 253-residue polypeptide: tRNA (guanine-N(1)-)-methyltransferase (253 aa).

S-adenosyl-L-methionine contacts are provided by residues glycine 110 and 130-135; that span reads IGDYIL.

The protein belongs to the RNA methyltransferase TrmD family. Homodimer.

The protein resides in the cytoplasm. It catalyses the reaction guanosine(37) in tRNA + S-adenosyl-L-methionine = N(1)-methylguanosine(37) in tRNA + S-adenosyl-L-homocysteine + H(+). Specifically methylates guanosine-37 in various tRNAs. The protein is tRNA (guanine-N(1)-)-methyltransferase of Carboxydothermus hydrogenoformans (strain ATCC BAA-161 / DSM 6008 / Z-2901).